We begin with the raw amino-acid sequence, 207 residues long: MRAIRMLLVSALALGTVTAYAGEQDVQRLTQLLEKSQTIEANFSQLTLGADGTSLQETSGKMTVKRPGLFYWHTDAPQEQVVVSDGKNVTLWDPDLEQATIKKLDVRLNQTPALLLSGDVSKISQSFDIASKEQGEVMDFTLKPKTKDTLFDSLRVSFRKGLINDMQLIDSVGQRTNILFNGVKANQAVPDSKFTFDIPKGADVIKE.

The N-terminal stretch at 1-21 is a signal peptide; it reads MRAIRMLLVSALALGTVTAYA.

It belongs to the LolA family. As to quaternary structure, monomer.

The protein localises to the periplasm. Participates in the translocation of lipoproteins from the inner membrane to the outer membrane. Only forms a complex with a lipoprotein if the residue after the N-terminal Cys is not an aspartate (The Asp acts as a targeting signal to indicate that the lipoprotein should stay in the inner membrane). The chain is Outer-membrane lipoprotein carrier protein from Pseudomonas putida (strain GB-1).